Here is a 188-residue protein sequence, read N- to C-terminus: Probable nicotinate-nucleotide adenylyltransferase (188 aa).

The protein belongs to the NadD family.

The enzyme catalyses nicotinate beta-D-ribonucleotide + ATP + H(+) = deamido-NAD(+) + diphosphate. Its pathway is cofactor biosynthesis; NAD(+) biosynthesis; deamido-NAD(+) from nicotinate D-ribonucleotide: step 1/1. Its function is as follows. Catalyzes the reversible adenylation of nicotinate mononucleotide (NaMN) to nicotinic acid adenine dinucleotide (NaAD). In Listeria monocytogenes serotype 4b (strain F2365), this protein is Probable nicotinate-nucleotide adenylyltransferase.